Reading from the N-terminus, the 147-residue chain is Small ribosomal subunit protein uS12 (147 aa).

This sequence belongs to the universal ribosomal protein uS12 family. As to quaternary structure, part of the 30S ribosomal subunit.

Its function is as follows. With S4 and S5 plays an important role in translational accuracy. Located at the interface of the 30S and 50S subunits. This is Small ribosomal subunit protein uS12 from Ignicoccus hospitalis (strain KIN4/I / DSM 18386 / JCM 14125).